Reading from the N-terminus, the 260-residue chain is Phosphonates import ATP-binding protein PhnC 2 (260 aa).

The 242-residue stretch at 4-245 (IQINKATKTY…KNTLRTIYQR (242 aa)) folds into the ABC transporter domain. 37–44 (GPSGAGKS) is an ATP binding site.

It belongs to the ABC transporter superfamily. Phosphonates importer (TC 3.A.1.9.1) family. In terms of assembly, the complex is composed of two ATP-binding proteins (PhnC), two transmembrane proteins (PhnE) and a solute-binding protein (PhnD).

It localises to the cell inner membrane. The enzyme catalyses phosphonate(out) + ATP + H2O = phosphonate(in) + ADP + phosphate + H(+). In terms of biological role, part of the ABC transporter complex PhnCDE involved in phosphonates import. Responsible for energy coupling to the transport system. In Trichodesmium erythraeum (strain IMS101), this protein is Phosphonates import ATP-binding protein PhnC 2.